The chain runs to 448 residues: Ribosomal protein uS12 methylthiotransferase RimO (448 aa).

The MTTase N-terminal domain occupies 16–126 (PRISFVSLGC…VVAAVHEAVP (111 aa)). Residues Cys-25, Cys-61, Cys-90, Cys-157, Cys-161, and Cys-164 each coordinate [4Fe-4S] cluster. Residues 143 to 380 (LTPRHYAYLK…MEAQAGVSLK (238 aa)) enclose the Radical SAM core domain. A TRAM domain is found at 383–448 (RAKVGKRLQV…DAYDLHGIAV (66 aa)).

The protein belongs to the methylthiotransferase family. RimO subfamily. Requires [4Fe-4S] cluster as cofactor.

It is found in the cytoplasm. The catalysed reaction is L-aspartate(89)-[ribosomal protein uS12]-hydrogen + (sulfur carrier)-SH + AH2 + 2 S-adenosyl-L-methionine = 3-methylsulfanyl-L-aspartate(89)-[ribosomal protein uS12]-hydrogen + (sulfur carrier)-H + 5'-deoxyadenosine + L-methionine + A + S-adenosyl-L-homocysteine + 2 H(+). Its function is as follows. Catalyzes the methylthiolation of an aspartic acid residue of ribosomal protein uS12. The protein is Ribosomal protein uS12 methylthiotransferase RimO of Methylorubrum populi (strain ATCC BAA-705 / NCIMB 13946 / BJ001) (Methylobacterium populi).